The chain runs to 187 residues: GTP cyclohydrolase 1 1 (187 aa).

The protein belongs to the GTP cyclohydrolase I family. As to quaternary structure, homomer.

The enzyme catalyses GTP + H2O = 7,8-dihydroneopterin 3'-triphosphate + formate + H(+). It functions in the pathway cofactor biosynthesis; 7,8-dihydroneopterin triphosphate biosynthesis; 7,8-dihydroneopterin triphosphate from GTP: step 1/1. This chain is GTP cyclohydrolase 1 1, found in Pseudomonas syringae pv. tomato (strain ATCC BAA-871 / DC3000).